A 312-amino-acid chain; its full sequence is Ribosomal protein L11 methyltransferase (312 aa).

Positions 160, 181, 203, and 248 each coordinate S-adenosyl-L-methionine.

The protein belongs to the methyltransferase superfamily. PrmA family.

It is found in the cytoplasm. It catalyses the reaction L-lysyl-[protein] + 3 S-adenosyl-L-methionine = N(6),N(6),N(6)-trimethyl-L-lysyl-[protein] + 3 S-adenosyl-L-homocysteine + 3 H(+). Its function is as follows. Methylates ribosomal protein L11. This chain is Ribosomal protein L11 methyltransferase, found in Fusobacterium nucleatum subsp. nucleatum (strain ATCC 25586 / DSM 15643 / BCRC 10681 / CIP 101130 / JCM 8532 / KCTC 2640 / LMG 13131 / VPI 4355).